A 284-amino-acid chain; its full sequence is Bifunctional protein FolD (284 aa).

Residues 166 to 168 (GAS) and Ile232 contribute to the NADP(+) site.

The protein belongs to the tetrahydrofolate dehydrogenase/cyclohydrolase family. As to quaternary structure, homodimer.

The catalysed reaction is (6R)-5,10-methylene-5,6,7,8-tetrahydrofolate + NADP(+) = (6R)-5,10-methenyltetrahydrofolate + NADPH. It carries out the reaction (6R)-5,10-methenyltetrahydrofolate + H2O = (6R)-10-formyltetrahydrofolate + H(+). It participates in one-carbon metabolism; tetrahydrofolate interconversion. Functionally, catalyzes the oxidation of 5,10-methylenetetrahydrofolate to 5,10-methenyltetrahydrofolate and then the hydrolysis of 5,10-methenyltetrahydrofolate to 10-formyltetrahydrofolate. This Shewanella amazonensis (strain ATCC BAA-1098 / SB2B) protein is Bifunctional protein FolD.